We begin with the raw amino-acid sequence, 338 residues long: Solute carrier family 35 member G5 (338 aa).

The interval 1 to 28 (MAGSHPYFNLPDSTHPSPPSGPPSLRWH) is disordered. 9 consecutive transmembrane segments (helical) span residues 37 to 57 (TNGL…VGPL), 67 to 87 (LPSL…ALLL), 105 to 125 (CFCA…VQVV), 160 to 180 (CGLL…LWTL), 190 to 210 (ALGY…LLVY), 221 to 241 (TVAF…LFVL), 250 to 270 (LLSW…FTCV), 281 to 301 (LVCA…YYML), and 310 to 330 (IMGA…NLSC). The 126-residue stretch at 49 to 174 (LPAGFVGPLS…SILGLIIIVG (126 aa)) folds into the EamA 1 domain. An EamA 2 domain is found at 272-325 (YAVTKAHPALVCAVLHSEVVVALILQYYMLPETVAPSDIMGAGVVLGNITIIPA).

The protein belongs to the SLC35G solute transporter family.

The protein resides in the membrane. This is Solute carrier family 35 member G5 (SLC35G5) from Gorilla gorilla gorilla (Western lowland gorilla).